Consider the following 294-residue polypeptide: Glutamyl-Q tRNA(Asp) synthetase (294 aa).

L-glutamate is bound by residues 7–11 (RFAPS) and Glu43. A 'HIGH' region motif is present at residues 10 to 20 (PSPSGPLHFGS). Zn(2+)-binding residues include Cys99, Cys101, Tyr113, and Cys117. Tyr168 and Arg186 together coordinate L-glutamate. Positions 224 to 228 (KLSKQ) match the 'KMSKS' region motif. Lys227 lines the ATP pocket.

This sequence belongs to the class-I aminoacyl-tRNA synthetase family. GluQ subfamily. Zn(2+) serves as cofactor.

Catalyzes the tRNA-independent activation of glutamate in presence of ATP and the subsequent transfer of glutamate onto a tRNA(Asp). Glutamate is transferred on the 2-amino-5-(4,5-dihydroxy-2-cyclopenten-1-yl) moiety of the queuosine in the wobble position of the QUC anticodon. In Vibrio parahaemolyticus serotype O3:K6 (strain RIMD 2210633), this protein is Glutamyl-Q tRNA(Asp) synthetase.